The chain runs to 141 residues: ATP synthase epsilon chain (141 aa).

The protein belongs to the ATPase epsilon chain family. As to quaternary structure, F-type ATPases have 2 components, CF(1) - the catalytic core - and CF(0) - the membrane proton channel. CF(1) has five subunits: alpha(3), beta(3), gamma(1), delta(1), epsilon(1). CF(0) has three main subunits: a, b and c.

The protein localises to the cell inner membrane. Functionally, produces ATP from ADP in the presence of a proton gradient across the membrane. The sequence is that of ATP synthase epsilon chain from Bordetella petrii (strain ATCC BAA-461 / DSM 12804 / CCUG 43448).